Here is a 207-residue protein sequence, read N- to C-terminus: Small ribosomal subunit protein uS5 (207 aa).

The disordered stretch occupies residues 1 to 51; it reads MTDTPTKQEITSKNDKVPGAIPGEQKKNNRNNDRKRNRRGDSKNLERDSDW. The segment covering 24–51 has biased composition (basic and acidic residues); the sequence is EQKKNNRNNDRKRNRRGDSKNLERDSDW. In terms of domain architecture, S5 DRBM spans 51-114; that stretch reads WQERVVQIRR…SDGKKNLVRV (64 aa).

Belongs to the universal ribosomal protein uS5 family. As to quaternary structure, part of the 30S ribosomal subunit. Contacts proteins S4 and S8.

Functionally, with S4 and S12 plays an important role in translational accuracy. Its function is as follows. Located at the back of the 30S subunit body where it stabilizes the conformation of the head with respect to the body. The sequence is that of Small ribosomal subunit protein uS5 from Prochlorococcus marinus (strain MIT 9312).